The sequence spans 64 residues: Large ribosomal subunit protein bL28 (64 aa).

A disordered region spans residues 1–23 (MSKECYFTGRKTVSSNNRSHAMN). Residues 11–23 (KTVSSNNRSHAMN) show a composition bias toward polar residues.

This sequence belongs to the bacterial ribosomal protein bL28 family.

The sequence is that of Large ribosomal subunit protein bL28 from Lactococcus lactis subsp. cremoris (strain SK11).